Here is a 401-residue protein sequence, read N- to C-terminus: O-methyltransferase mfmE (401 aa).

Residues 243-244 and aspartate 268 each bind S-adenosyl-L-methionine; that span reads GG. Residue histidine 308 is the Proton acceptor of the active site.

Belongs to the class I-like SAM-binding methyltransferase superfamily. Cation-independent O-methyltransferase family. COMT subfamily.

The protein operates within secondary metabolite biosynthesis; terpenoid biosynthesis. O-methyltransferase; part of the gene cluster that mediates the biosynthesis of the phthalide-terpenoid hybrid 11'-O-desmethylfendlerol. Within the pathway, mfmE catalyzes the 7-O-methylation of the phthalide 5,7-dihydroxy-4-(hydroxymethyl)-6-methylphthalide to yield 5-hydroxy-4-(hydroxymethyl)-7-methoxy-6-methylphthalide. The biosynthesis of 11'-O-desmethylfendlerol begins with the NR-PKS mfmB that forms 3,5-dimethylorsellinic acid (DMOA), which is then transformed into the phthalide 5,7-dihydroxy-4-(hydroxymethyl)-6-methylphthalide by the cytochrome P450 monooxygenase mfmA and the hydrolase mfmC. Subsequently, the methyltransferase mfmE catalyzes 7-O-methylation to yield 5-hydroxy-4-(hydroxymethyl)-7-methoxy-6-methylphthalide, which undergoes C-3 hydroxylation by the cytochrome P450 monooxygenase mfmF. The resultant cyclopolic acid (2,5-dihydroxy-4-(hydroxymethyl)-7-methoxy-6-methylphthalide) is then farnesylated by the DMATS-type prenyltransferase mfmD to afford 5-O-farnesylcyclopolic acid. Finally, the Pyr4-family terpene cyclase mfmH cyclizes the farnesyl moiety of 5-O-farnesylcyclopolic acid into a drimane-like structure, thus completing the biosynthesis of 11'-O-desmethylfendlerol. In Annulohypoxylon moriforme (Filamentous fungus), this protein is O-methyltransferase mfmE.